The sequence spans 193 residues: Dual-action ribosomal maturation protein DarP (193 aa).

Residues 1-10 are compositionally biased toward basic and acidic residues; it reads MRGRDEETGE. Disordered regions lie at residues 1–20 and 171–193; these read MRGR…SQQR and QEQG…EDDE. The segment covering 178 to 193 has biased composition (acidic residues); that stretch reads GDSELEDGESASEDDE.

Belongs to the DarP family.

It localises to the cytoplasm. Its function is as follows. Member of a network of 50S ribosomal subunit biogenesis factors which assembles along the 30S-50S interface, preventing incorrect 23S rRNA structures from forming. Promotes peptidyl transferase center (PTC) maturation. This is Dual-action ribosomal maturation protein DarP from Xanthomonas axonopodis pv. citri (strain 306).